We begin with the raw amino-acid sequence, 112 residues long: ATP synthase epsilon chain (112 aa).

The protein belongs to the ATPase epsilon chain family. In terms of assembly, F-type ATPases have 2 components, CF(1) - the catalytic core - and CF(0) - the membrane proton channel. CF(1) has five subunits: alpha(3), beta(3), gamma(1), delta(1), epsilon(1). CF(0) has three main subunits: a, b and c.

It localises to the cell inner membrane. In terms of biological role, produces ATP from ADP in the presence of a proton gradient across the membrane. This chain is ATP synthase epsilon chain, found in Rickettsia rickettsii (strain Sheila Smith).